The chain runs to 353 residues: tRNA N6-adenosine threonylcarbamoyltransferase (353 aa).

Fe cation is bound by residues H109 and H113. Substrate-binding positions include 136-140, D169, G182, D186, and N284; that span reads TVSGG. D312 serves as a coordination point for Fe cation.

This sequence belongs to the KAE1 / TsaD family. Requires Fe(2+) as cofactor.

Its subcellular location is the cytoplasm. The catalysed reaction is L-threonylcarbamoyladenylate + adenosine(37) in tRNA = N(6)-L-threonylcarbamoyladenosine(37) in tRNA + AMP + H(+). Required for the formation of a threonylcarbamoyl group on adenosine at position 37 (t(6)A37) in tRNAs that read codons beginning with adenine. Is involved in the transfer of the threonylcarbamoyl moiety of threonylcarbamoyl-AMP (TC-AMP) to the N6 group of A37, together with TsaE and TsaB. TsaD likely plays a direct catalytic role in this reaction. The protein is tRNA N6-adenosine threonylcarbamoyltransferase of Chlorobaculum tepidum (strain ATCC 49652 / DSM 12025 / NBRC 103806 / TLS) (Chlorobium tepidum).